The primary structure comprises 166 residues: Protein FAM163B (166 aa).

Residues 6 to 26 (VVITGGILATVILLCIIAVLC) traverse the membrane as a helical segment. Residue serine 40 is modified to Phosphoserine.

The protein belongs to the FAM163 family.

The protein localises to the membrane. In Homo sapiens (Human), this protein is Protein FAM163B (FAM163B).